A 311-amino-acid chain; its full sequence is Trem-like transcript 1 protein (311 aa).

A signal peptide spans 1 to 15; sequence MGLTLLLLLLLGLEG. The Ig-like V-type domain occupies 16–121; that stretch reads QGIVGSLPEV…PQILHRVSLN (106 aa). Topologically, residues 16-162 are extracellular; sequence QGIVGSLPEV…EPSQDEKSIP (147 aa). Disulfide bonds link C38-C104 and C52-C59. The chain crosses the membrane as a helical span at residues 163 to 183; that stretch reads LIWGAVLLVGLLVAAVVLFAV. The Cytoplasmic portion of the chain corresponds to 184–311; that stretch reads MAKRKQGNRL…NPPNNQTPSS (128 aa). C196 is lipidated: S-palmitoyl cysteine. Residues 229-263 form a disordered region; sequence VPHIRLDSPPSFDNTTYTSLPLDSPSGKPSLPAPS. Positions 239–249 are enriched in polar residues; the sequence is SFDNTTYTSLP. Residues 279–284 carry the ITIM motif; sequence VTYATV. The disordered stretch occupies residues 287-311; sequence PGGNKGGGTSCGPAQNPPNNQTPSS.

As to quaternary structure, when phosphorylated, interacts with PTPN6. When phosphorylated, interacts with PTPN11. Phosphorylated on tyrosine residues. In terms of tissue distribution, detected in platelets, monocytic leukemia and in T-cell leukemia.

It is found in the cell membrane. The protein resides in the cytoplasm. Functionally, cell surface receptor that may play a role in the innate and adaptive immune response. The polypeptide is Trem-like transcript 1 protein (TREML1) (Homo sapiens (Human)).